A 416-amino-acid polypeptide reads, in one-letter code: Glyceraldehyde-3-phosphate dehydrogenase, chloroplastic (416 aa).

A chloroplast-targeting transit peptide spans 1-78 (MAFVAPVSSV…APARTSNAPS (78 aa)). Residues 90–91 (RI), Asp114, and Arg158 contribute to the NADP(+) site. D-glyceraldehyde 3-phosphate-binding positions include 232-234 (SCT), Thr263, Arg278, 291-292 (TG), and Arg314. The Nucleophile role is filled by Cys233. Residue Asn396 coordinates NADP(+).

Belongs to the glyceraldehyde-3-phosphate dehydrogenase family. Homotetramer.

The protein localises to the plastid. Its subcellular location is the chloroplast. The enzyme catalyses D-glyceraldehyde 3-phosphate + phosphate + NADP(+) = (2R)-3-phospho-glyceroyl phosphate + NADPH + H(+). The protein operates within carbohydrate biosynthesis; Calvin cycle. The sequence is that of Glyceraldehyde-3-phosphate dehydrogenase, chloroplastic (GAPA) from Gracilaria gracilis (Red alga).